The chain runs to 592 residues: A-type ATP synthase subunit A (592 aa).

Position 233–240 (233–240) interacts with ATP; it reads GPFGSGKT.

It belongs to the ATPase alpha/beta chains family. Has multiple subunits with at least A(3), B(3), C, D, E, F, H, I and proteolipid K(x).

It is found in the cell membrane. It carries out the reaction ATP + H2O + 4 H(+)(in) = ADP + phosphate + 5 H(+)(out). Its function is as follows. Component of the A-type ATP synthase that produces ATP from ADP in the presence of a proton gradient across the membrane. The A chain is the catalytic subunit. In Saccharolobus islandicus (strain Y.G.57.14 / Yellowstone #1) (Sulfolobus islandicus), this protein is A-type ATP synthase subunit A.